Consider the following 58-residue polypeptide: Large ribosomal subunit protein uL30 (58 aa).

This sequence belongs to the universal ribosomal protein uL30 family. Part of the 50S ribosomal subunit.

The protein is Large ribosomal subunit protein uL30 of Pseudomonas aeruginosa (strain LESB58).